A 117-amino-acid chain; its full sequence is Putative pterin-4-alpha-carbinolamine dehydratase (117 aa).

This sequence belongs to the pterin-4-alpha-carbinolamine dehydratase family.

The catalysed reaction is (4aS,6R)-4a-hydroxy-L-erythro-5,6,7,8-tetrahydrobiopterin = (6R)-L-erythro-6,7-dihydrobiopterin + H2O. This is Putative pterin-4-alpha-carbinolamine dehydratase from Colwellia psychrerythraea (strain 34H / ATCC BAA-681) (Vibrio psychroerythus).